The following is a 232-amino-acid chain: 5'-methylthioadenosine/S-adenosylhomocysteine nucleosidase (232 aa).

The active-site Proton acceptor is the Glu-12. Substrate-binding positions include Gly-78, Met-153, and 174–175; that span reads ME. Asp-198 serves as the catalytic Proton donor.

It belongs to the PNP/UDP phosphorylase family. MtnN subfamily.

The catalysed reaction is S-adenosyl-L-homocysteine + H2O = S-(5-deoxy-D-ribos-5-yl)-L-homocysteine + adenine. It carries out the reaction S-methyl-5'-thioadenosine + H2O = 5-(methylsulfanyl)-D-ribose + adenine. It catalyses the reaction 5'-deoxyadenosine + H2O = 5-deoxy-D-ribose + adenine. The protein operates within amino-acid biosynthesis; L-methionine biosynthesis via salvage pathway; S-methyl-5-thio-alpha-D-ribose 1-phosphate from S-methyl-5'-thioadenosine (hydrolase route): step 1/2. Catalyzes the irreversible cleavage of the glycosidic bond in both 5'-methylthioadenosine (MTA) and S-adenosylhomocysteine (SAH/AdoHcy) to adenine and the corresponding thioribose, 5'-methylthioribose and S-ribosylhomocysteine, respectively. Also cleaves 5'-deoxyadenosine, a toxic by-product of radical S-adenosylmethionine (SAM) enzymes, into 5-deoxyribose and adenine. This is 5'-methylthioadenosine/S-adenosylhomocysteine nucleosidase from Anoxybacillus flavithermus (strain DSM 21510 / WK1).